The primary structure comprises 145 residues: Protein SprT-like (145 aa).

Residues 5–141 (DYVREVSLAD…CGRCHGRLIK (137 aa)) form the SprT-like domain. H64 contacts Zn(2+). E65 is a catalytic residue. Residue H68 coordinates Zn(2+).

The protein belongs to the SprT family. It depends on Zn(2+) as a cofactor.

It localises to the cytoplasm. The polypeptide is Protein SprT-like (Streptococcus equi subsp. zooepidemicus (strain H70)).